The primary structure comprises 380 residues: Cytochrome b (380 aa).

4 helical membrane passes run 34-54 (FGSLLGVCLIAQIATGLFLAM), 78-99 (WLLRNLHANGASFFFICIYFHI), 114-134 (WNIGVILLFLVMATAFVGYVL), and 179-199 (FFTFHFILPFIIAAASMIHLL). Residues H84 and H98 each coordinate heme b. Residues H183 and H197 each contribute to the heme b site. An a ubiquinone-binding site is contributed by H202. A run of 4 helical transmembrane segments spans residues 227-247 (YKDLLGFVIMLGALASLSTFA), 289-309 (LGGVLALLLSIMVLFLMPIIH), 321-341 (IAKTFFWALIANTAILTWIGG), and 348-368 (FITIGQIASGLYFLIFVLLIP).

It belongs to the cytochrome b family. In terms of assembly, the cytochrome bc1 complex contains 3 respiratory subunits (MT-CYB, CYC1 and UQCRFS1), 2 core proteins (UQCRC1 and UQCRC2) and probably 6 low-molecular weight proteins. Heme b is required as a cofactor.

The protein resides in the mitochondrion inner membrane. In terms of biological role, component of the ubiquinol-cytochrome c reductase complex (complex III or cytochrome b-c1 complex) that is part of the mitochondrial respiratory chain. The b-c1 complex mediates electron transfer from ubiquinol to cytochrome c. Contributes to the generation of a proton gradient across the mitochondrial membrane that is then used for ATP synthesis. This Pelophylax nigromaculatus (Black-spotted frog) protein is Cytochrome b (mt-cyb).